A 203-amino-acid polypeptide reads, in one-letter code: Dephospho-CoA kinase (203 aa).

Residues 3-201 (SVGLTGGIGS…QRYLECAAAA (199 aa)) enclose the DPCK domain. 11–16 (GSGKTT) provides a ligand contact to ATP.

It belongs to the CoaE family.

The protein localises to the cytoplasm. The enzyme catalyses 3'-dephospho-CoA + ATP = ADP + CoA + H(+). It participates in cofactor biosynthesis; coenzyme A biosynthesis; CoA from (R)-pantothenate: step 5/5. Catalyzes the phosphorylation of the 3'-hydroxyl group of dephosphocoenzyme A to form coenzyme A. In Burkholderia pseudomallei (strain 1710b), this protein is Dephospho-CoA kinase.